The primary structure comprises 218 residues: LexA repressor (218 aa).

Residues 28–48 constitute a DNA-binding region (H-T-H motif); that stretch reads RAEIAAEFGFSSPNAAEEHLR. Active-site for autocatalytic cleavage activity residues include S136 and K173.

The protein belongs to the peptidase S24 family. In terms of assembly, homodimer.

The enzyme catalyses Hydrolysis of Ala-|-Gly bond in repressor LexA.. Its function is as follows. Represses a number of genes involved in the response to DNA damage (SOS response), including recA and lexA. In the presence of single-stranded DNA, RecA interacts with LexA causing an autocatalytic cleavage which disrupts the DNA-binding part of LexA, leading to derepression of the SOS regulon and eventually DNA repair. The sequence is that of LexA repressor from Cupriavidus pinatubonensis (strain JMP 134 / LMG 1197) (Cupriavidus necator (strain JMP 134)).